The primary structure comprises 427 residues: Terminal nucleotidyltransferase 5B (427 aa).

Positions 1 to 11 are enriched in acidic residues; the sequence is MMPSESGDESL. The tract at residues 1 to 46 is disordered; the sequence is MMPSESGDESLEQPAAQVGTGAASAVATAGAAGGGPDLEASSASLG. Low complexity predominate over residues 15–30; sequence AAQVGTGAASAVATAG.

Belongs to the TENT family.

The protein localises to the cytoplasm. Its subcellular location is the nucleus. It carries out the reaction RNA(n) + ATP = RNA(n)-3'-adenine ribonucleotide + diphosphate. Catalyzes the transfer of one adenosine molecule from an ATP to an mRNA poly(A) tail bearing a 3'-OH terminal group in an ATP hydrolysis-dependent manner. May be involved in maintaining the translation efficiency of at least some genes through preventing degradation of their mRNAs. Prefers RNA molecules that are adenosine-rich close to 3'-end. In addition, may inhibit cell proliferation and cell cycle progression through ubiquitination of beta-catenin/CTNNB1. This chain is Terminal nucleotidyltransferase 5B, found in Rattus norvegicus (Rat).